We begin with the raw amino-acid sequence, 145 residues long: Cuticle protein 7 (145 aa).

One can recognise a Chitin-binding type R&amp;R domain in the interval 41–114 (PVNVATSYHA…VASNALPVGP (74 aa)).

The chain is Cuticle protein 7 from Blaberus craniifer (Death's head cockroach).